The following is a 378-amino-acid chain: UPF0754 membrane protein BCA_0919 (378 aa).

2 helical membrane passes run 1 to 21 (MNIW…GGFT) and 357 to 377 (YLGA…LLFL).

This sequence belongs to the UPF0754 family.

It is found in the cell membrane. The protein is UPF0754 membrane protein BCA_0919 of Bacillus cereus (strain 03BB102).